The primary structure comprises 417 residues: UDP-N-acetylglucosamine 1-carboxyvinyltransferase (417 aa).

Phosphoenolpyruvate is bound at residue 22 to 23 (KN). A UDP-N-acetyl-alpha-D-glucosamine-binding site is contributed by Arg-91. Cys-115 serves as the catalytic Proton donor. Residue Cys-115 is modified to 2-(S-cysteinyl)pyruvic acid O-phosphothioketal. Residues 120-124 (RPVDL), Asp-304, and Ile-326 contribute to the UDP-N-acetyl-alpha-D-glucosamine site.

It belongs to the EPSP synthase family. MurA subfamily.

It localises to the cytoplasm. It catalyses the reaction phosphoenolpyruvate + UDP-N-acetyl-alpha-D-glucosamine = UDP-N-acetyl-3-O-(1-carboxyvinyl)-alpha-D-glucosamine + phosphate. Its pathway is cell wall biogenesis; peptidoglycan biosynthesis. Functionally, cell wall formation. Adds enolpyruvyl to UDP-N-acetylglucosamine. This is UDP-N-acetylglucosamine 1-carboxyvinyltransferase from Nitratidesulfovibrio vulgaris (strain DSM 19637 / Miyazaki F) (Desulfovibrio vulgaris).